The sequence spans 308 residues: High-affinity branched-chain amino acid transport system permease protein LivH (308 aa).

Over 1 to 21 (MSEQFLYFLQQMFNGVTLGST) the chain is Cytoplasmic. Residues 22-42 (YALIAIGYTMVYGIIGMINFA) traverse the membrane as a helical segment. Residues 43–45 (HGE) lie on the Periplasmic side of the membrane. The chain crosses the membrane as a helical span at residues 46–66 (VYMIGSYVSFMIIAALMMMGI). Topologically, residues 67-68 (DT) are cytoplasmic. Residues 69–89 (GWLLVAAGFVGAIVIASAYGW) form a helical membrane-spanning segment. Topologically, residues 90-104 (SIERVAYRPVRNSKR) are periplasmic. The chain crosses the membrane as a helical span at residues 105–125 (LIALISAIGMSIFLQNYVSLT). Residues 126–154 (EGSRDVALPSLFNGQWVVGHSENFSASIT) are Cytoplasmic-facing. The chain crosses the membrane as a helical span at residues 155–175 (TMQAVIWIVTFLAMLALTIFI). At 176-203 (RYSRMGRACRACAEDLKMASLLGINTDR) the chain is on the periplasmic side. A helical transmembrane segment spans residues 204-224 (VIALTFVIGAAMAAVAGVLLG). At 225 to 245 (QFYGVINPYIGFMAGMKAFTA) the chain is on the cytoplasmic side. The chain crosses the membrane as a helical span at residues 246–266 (AVLGGIGSIPGAMIGGLILGI). Residues 267–280 (AEALSSAYLSTEYK) lie on the Periplasmic side of the membrane. The helical transmembrane segment at 281-301 (DVVSFALLILVLLVMPTGILG) threads the bilayer. The Cytoplasmic segment spans residues 302-308 (RPEVEKV).

Belongs to the binding-protein-dependent transport system permease family. LivHM subfamily.

It localises to the cell inner membrane. In terms of biological role, part of the binding-protein-dependent transport system for branched-chain amino acids. Probably responsible for the translocation of the substrates across the membrane. The polypeptide is High-affinity branched-chain amino acid transport system permease protein LivH (livH) (Escherichia coli O157:H7).